Consider the following 553-residue polypeptide: Coiled-coil domain-containing protein 22 homolog (553 aa).

Coiled-coil stretches lie at residues 261–404 (LEEL…TATQ) and 498–553 (NVTK…VAKA).

Belongs to the CCDC22 family.

The sequence is that of Coiled-coil domain-containing protein 22 homolog from Drosophila pseudoobscura pseudoobscura (Fruit fly).